The sequence spans 230 residues: Oxygen-evolving enhancer protein 3-2, chloroplastic (230 aa).

The transit peptide at 1 to 49 (MAQAVTSMAGLRGASQAVLEGSLQINGSNRLNISRVSVGSQRTGLVIRA) directs the protein to the chloroplast. Residues 50 to 82 (QQNVSVPESSRRSVIGLVAAGLAGGSFVKAVFA) constitute a thylakoid transit peptide. S125 carries the post-translational modification Phosphoserine. At T195 the chain carries Phosphothreonine. Y215 is subject to Phosphotyrosine. S216 bears the Phosphoserine mark. T218 carries the phosphothreonine modification.

It belongs to the PsbQ family.

The protein localises to the plastid. It localises to the chloroplast thylakoid membrane. Its function is as follows. Required for photosystem II assembly/stability and photoautotrophic growth under low light conditions. In Arabidopsis thaliana (Mouse-ear cress), this protein is Oxygen-evolving enhancer protein 3-2, chloroplastic (PSBQ2).